The sequence spans 580 residues: Cytochrome P450 monooxygenase helB1 (580 aa).

Residues 1-32 are disordered; it reads MRTYAIRPVSNRLPGPIEPKKHRRDRDNSTTG. N-linked (GlcNAc...) asparagine glycosylation is present at asparagine 28. Residues 61 to 81 traverse the membrane as a helical segment; it reads FLNTISVLQVLAAIFIGALTY. Position 497 (cysteine 497) interacts with heme.

It belongs to the cytochrome P450 family. Requires heme as cofactor.

Its subcellular location is the membrane. The protein operates within mycotoxin biosynthesis. Its function is as follows. Cytochrome P450 monooxygenase; part of the gene cluster that mediates the biosynthesis of helvolic acid, an antibacterial nortriterpenoid. Protostadienol synthase helA cyclizes (3S)-oxidosqualene to (17Z)-protosta-17(20),24-dien-3-beta-ol (protostadienol). The synthesis of protostadienol is followed by several steps of monooxygenation, dehydrogenation, and acyl transfer to yield the final helvolic acid. Following the cyclization to the tetracyclic protostadienol by helA, cytochrome P450 monooxygenases helB1-mediated and helB2-mediated oxidation at C-4 and C-16, acyltransferase helD2-dependent acetylation of 16-OH, oxidation of C-21 by cytochrome P450 monooxygenase helB4, and short chain dehydrogenase helC-dependent oxidative decarboxylation yield the fusidane skeleton. This intermediate is further modified in three additional steps mediated by the cytochrome P450 monooxygenase helB3, the acyltransferase helD1, and the 3-ketosteroid 1-dehydrogenase helE to give helvolic acid. Compared with the late stages in the biosynthesis of helvolic acid, enzymes involved in the early stage modifications act in a relatively strict order. The hydroxylation of C-16 by helB1 and subsequent acetylation by helD2 should occur before the helB3-mediated oxidation of C-21. C-4 demethylation in fusidane-type antibiotics proceeds in an unusual manner though it is also achieved by oxidative decarboxylation. The methyl group at C-4 beta position is oxidized by helB1 and subsequently removed by the short chain dehydrogenase helC. This is Cytochrome P450 monooxygenase helB1 from Aspergillus fumigatus (strain ATCC MYA-4609 / CBS 101355 / FGSC A1100 / Af293) (Neosartorya fumigata).